The primary structure comprises 279 residues: Probable endonuclease 4 (279 aa).

Residues His66, His106, Glu142, Asp175, His178, His212, Asp225, His227, and Glu257 each contribute to the Zn(2+) site.

The protein belongs to the AP endonuclease 2 family. Zn(2+) serves as cofactor.

The enzyme catalyses Endonucleolytic cleavage to 5'-phosphooligonucleotide end-products.. Endonuclease IV plays a role in DNA repair. It cleaves phosphodiester bonds at apurinic or apyrimidinic (AP) sites, generating a 3'-hydroxyl group and a 5'-terminal sugar phosphate. The polypeptide is Probable endonuclease 4 (Moorella thermoacetica (strain ATCC 39073 / JCM 9320)).